We begin with the raw amino-acid sequence, 486 residues long: Cardiolipin synthase A (486 aa).

2 helical membrane-spanning segments follow: residues 3 to 23 (TFYTVVSWLVILGYWVLIAGV) and 38 to 58 (MAWLLIIYILPMVGIIAYLSV). 2 PLD phosphodiesterase domains span residues 219-246 (MDLRQHRKMVMIDNYIAYTGSMNMVDPR) and 399-426 (EGGLLHTKSVLVDGELSLVGTVNLDMRS). Catalysis depends on residues His224, Lys226, Asp231, His404, Lys406, and Asp411.

It belongs to the phospholipase D family. Cardiolipin synthase subfamily. ClsA sub-subfamily.

It is found in the cell inner membrane. It carries out the reaction 2 a 1,2-diacyl-sn-glycero-3-phospho-(1'-sn-glycerol) = a cardiolipin + glycerol. Catalyzes the reversible phosphatidyl group transfer from one phosphatidylglycerol molecule to another to form cardiolipin (CL) (diphosphatidylglycerol) and glycerol. This is Cardiolipin synthase A from Salmonella gallinarum (strain 287/91 / NCTC 13346).